The chain runs to 297 residues: PIH1 domain-containing protein 1 (297 aa).

It belongs to the PIH1 family.

The protein localises to the nucleus. In terms of biological role, involved in the assembly of C/D box small nucleolar ribonucleoprotein (snoRNP) particles. Recruits the SWI/SNF complex to the core promoter of rRNA genes and enhances pre-rRNA transcription. Mediates interaction of TELO2 with the R2TP complex which is necessary for the stability of MTOR and SMG1. Positively regulates the assembly and activity of the mTORC1 complex. This Xenopus laevis (African clawed frog) protein is PIH1 domain-containing protein 1 (pih1d1).